The sequence spans 187 residues: Elongation factor P (187 aa).

Belongs to the elongation factor P family.

It is found in the cytoplasm. It participates in protein biosynthesis; polypeptide chain elongation. Its function is as follows. Involved in peptide bond synthesis. Stimulates efficient translation and peptide-bond synthesis on native or reconstituted 70S ribosomes in vitro. Probably functions indirectly by altering the affinity of the ribosome for aminoacyl-tRNA, thus increasing their reactivity as acceptors for peptidyl transferase. The chain is Elongation factor P from Brachyspira hyodysenteriae (strain ATCC 49526 / WA1).